A 316-amino-acid polypeptide reads, in one-letter code: MTSKNPIQKALYLAFERAQWSVLRDAVPMTLSEQDLENLRGINEKVSLSEVTDIYLPLSRLLNLIVKAKQQRGLVLDEFLGQKPSSSPYIISLAGSVAVGKSTTARILQALLSQWPEHPKVDLVTTDGFLYPLADLKRKGLLQRKGFPESYDMKMLVEFISGVKSGQPHVNAPIYSHVTYDRIRGQHQTVSQPDILILEGLNVLQTGLDSPVDIRRPFVSDFVDFSIYVDAEEHLLKQWYQERFLQFRKGAFSDEKSYFHHYASLTDDEANTIAAKIWDTINGPNLQLNIQPTRERAHLILQKGQDHLMSHVLLRK.

95-102 contacts ATP; sequence GSVAVGKS.

Belongs to the prokaryotic pantothenate kinase family.

The protein localises to the cytoplasm. The catalysed reaction is (R)-pantothenate + ATP = (R)-4'-phosphopantothenate + ADP + H(+). It functions in the pathway cofactor biosynthesis; coenzyme A biosynthesis; CoA from (R)-pantothenate: step 1/5. In Shewanella oneidensis (strain ATCC 700550 / JCM 31522 / CIP 106686 / LMG 19005 / NCIMB 14063 / MR-1), this protein is Pantothenate kinase.